The following is a 406-amino-acid chain: 2,3-diketo-5-methylthiopentyl-1-phosphate enolase (406 aa).

The Proton acceptor role is filled by Lys-94. Substrate is bound by residues Lys-143, 169–172 (KDDE), His-260, Gly-332, and 354–355 (GG). Mg(2+) contacts are provided by Lys-169, Asp-171, and Glu-172. Lys-169 is modified (N6-carboxylysine).

This sequence belongs to the RuBisCO large chain family. Type IV subfamily. In terms of assembly, homodimer. The cofactor is Mg(2+).

The catalysed reaction is 5-methylsulfanyl-2,3-dioxopentyl phosphate = 2-hydroxy-5-methylsulfanyl-3-oxopent-1-enyl phosphate. Its pathway is amino-acid biosynthesis; L-methionine biosynthesis via salvage pathway; L-methionine from S-methyl-5-thio-alpha-D-ribose 1-phosphate: step 3/6. In terms of biological role, catalyzes the enolization of 2,3-diketo-5-methylthiopentyl-1-phosphate (DK-MTP-1-P) into 2-hydroxy-3-keto-5-methylthiopentenyl-1-phosphate (HK-MTPenyl-1-P). The chain is 2,3-diketo-5-methylthiopentyl-1-phosphate enolase from Bacillus pumilus (strain SAFR-032).